The sequence spans 105 residues: Met repressor (105 aa).

Belongs to the MetJ family. In terms of assembly, homodimer.

It localises to the cytoplasm. Functionally, this regulatory protein, when combined with SAM (S-adenosylmethionine) represses the expression of the methionine regulon and of enzymes involved in SAM synthesis. The polypeptide is Met repressor (Hamiltonella defensa subsp. Acyrthosiphon pisum (strain 5AT)).